The primary structure comprises 89 residues: Large ribosomal subunit protein bL28 (89 aa).

This sequence belongs to the bacterial ribosomal protein bL28 family.

The polypeptide is Large ribosomal subunit protein bL28 (Chlamydia muridarum (strain MoPn / Nigg)).